We begin with the raw amino-acid sequence, 394 residues long: Shematrin-like protein 2 (394 aa).

The first 19 residues, 1 to 19 (MKPFISLASLIVLIASASA), serve as a signal peptide directing secretion.

Prismatic layer of shell (at protein level). Expressed primarily in the mantle with highest level in the mantle edge and lower level in the mantle pallium.

It localises to the secreted. This is Shematrin-like protein 2 from Pinctada maxima (Silver-lipped pearl oyster).